Consider the following 173-residue polypeptide: Ribulose bisphosphate carboxylase small subunit, chloroplastic 5 (173 aa).

A chloroplast-targeting transit peptide spans 1–49; it reads MASIPATVATVAQANMVAPFTGLKSNAAFPVTKKVNDFSTLPSNGGRVQ.

The protein belongs to the RuBisCO small chain family. Heterohexadecamer of 8 large and 8 small subunits.

It is found in the plastid. It localises to the chloroplast. Functionally, ruBisCO catalyzes two reactions: the carboxylation of D-ribulose 1,5-bisphosphate, the primary event in carbon dioxide fixation, as well as the oxidative fragmentation of the pentose substrate. Both reactions occur simultaneously and in competition at the same active site. Although the small subunit is not catalytic it is essential for maximal activity. This Flaveria pringlei protein is Ribulose bisphosphate carboxylase small subunit, chloroplastic 5.